The following is a 108-amino-acid chain: Nucleoid-associated protein mma_2329 (108 aa).

It belongs to the YbaB/EbfC family. As to quaternary structure, homodimer.

The protein resides in the cytoplasm. The protein localises to the nucleoid. In terms of biological role, binds to DNA and alters its conformation. May be involved in regulation of gene expression, nucleoid organization and DNA protection. The chain is Nucleoid-associated protein mma_2329 from Janthinobacterium sp. (strain Marseille) (Minibacterium massiliensis).